A 250-amino-acid polypeptide reads, in one-letter code: MALRAGLVLGFHTLMTLLSPQEAGATKADHMGSYGPAFYQSYGASGQFTHEFDEEQLFSVDLKKSEAVWRLPEFGDFARFDPQGGLAGIAAIKAHLDILVERSNRSRAINVPPRVTVLPKSRVELGQPNILICIVDNIFPPVINITWLRNGQTVTEGVAQTSFYSQPDHLFRKFHYLPFVPSAEDVYDCQVEHWGLDAPLLRHWELQVPIPPPDAMETLVCALGLAIGLVGFLVGTVLIIMGTYVSSVPR.

Positions 1–25 are cleaved as a signal peptide; the sequence is MALRAGLVLGFHTLMTLLSPQEAGA. Positions 26 to 110 are alpha-1; sequence TKADHMGSYG…ERSNRSRAIN (85 aa). Over 26-217 the chain is Extracellular; the sequence is TKADHMGSYG…VPIPPPDAME (192 aa). 2 N-linked (GlcNAc...) asparagine glycosylation sites follow: asparagine 104 and asparagine 144. Positions 111 to 204 are alpha-2; the sequence is VPPRVTVLPK…GLDAPLLRHW (94 aa). Residues 113 to 205 form the Ig-like C1-type domain; the sequence is PRVTVLPKSR…LDAPLLRHWE (93 aa). Residues cysteine 133 and cysteine 189 are joined by a disulfide bond. The segment at 205–217 is connecting peptide; sequence ELQVPIPPPDAME. The helical transmembrane segment at 218–240 threads the bilayer; sequence TLVCALGLAIGLVGFLVGTVLII. Residues 241-250 are Cytoplasmic-facing; sequence MGTYVSSVPR.

The protein belongs to the MHC class II family. As to quaternary structure, heterodimer of an alpha chain (DOA) and a beta chain (DOB). Forms a heterotetrameric complex with an HLA-DM molecule during intracellular transport in endosomal/lysosomal compartments in B-cells.

It is found in the endosome membrane. Its subcellular location is the lysosome membrane. Its function is as follows. Important modulator in the HLA class II restricted antigen presentation pathway by interaction with the HLA-DM molecule in B-cells. Modifies peptide exchange activity of HLA-DM. This Homo sapiens (Human) protein is HLA class II histocompatibility antigen, DO alpha chain (HLA-DOA).